The primary structure comprises 348 residues: Mannonate dehydratase (348 aa).

Belongs to the mannonate dehydratase family. It depends on Fe(2+) as a cofactor. Requires Mn(2+) as cofactor.

The catalysed reaction is D-mannonate = 2-dehydro-3-deoxy-D-gluconate + H2O. It participates in carbohydrate metabolism; pentose and glucuronate interconversion. In terms of biological role, catalyzes the dehydration of D-mannonate. The polypeptide is Mannonate dehydratase (Streptococcus agalactiae serotype III (strain NEM316)).